The primary structure comprises 791 residues: Ubiquitin carboxyl-terminal hydrolase 10-A (791 aa).

Composition is skewed to polar residues over residues 118-139 (FSESSIPDGSGNADSDGTSGTG) and 270-284 (DTTENLGVTNGQTLE). Disordered regions lie at residues 118–156 (FSESSIPDGSGNADSDGTSGTGQRERKKKKKRPPGYYSY) and 270–291 (DTTENLGVTNGQTLESPEEDTA). Residues 408–788 (RGLINKGNWC…TAYLLYYRRV (381 aa)) form the USP domain. Cys417 (nucleophile) is an active-site residue. The disordered stretch occupies residues 560-580 (EVNKEEQEGSDEEWEQVGPRN). His742 (proton acceptor) is an active-site residue.

It belongs to the peptidase C19 family. USP10 subfamily.

The protein resides in the cytoplasm. It is found in the nucleus. The enzyme catalyses Thiol-dependent hydrolysis of ester, thioester, amide, peptide and isopeptide bonds formed by the C-terminal Gly of ubiquitin (a 76-residue protein attached to proteins as an intracellular targeting signal).. Its function is as follows. Hydrolase that can remove conjugated ubiquitin from target proteins such as p53/tp53, rps2/us5, rps3/us3, rps10/eS10, becn1, snx3 and cftr. Acts as an essential regulator of p53/tp53 stability: in unstressed cells, specifically deubiquitinates p53/tp53 in the cytoplasm, leading to counteracts MDM2 action and stabilize p53/tp53. Following DNA damage, translocates to the nucleus and deubiquitinates p53/tp53, leading to regulate the p53/TP53-dependent DNA damage response. Component of a regulatory loop that controls autophagy and p53/tp53 levels. Plays a key role in 40S ribosome subunit recycling when a ribosome has stalled during translation: acts both by inhibiting formation of stress granules, which store stalled translation pre-initiation complexes, and mediating deubiquitination of 40S ribosome subunits. Deubiquitinates cftr in early endosomes, enhancing its endocytic recycling. The sequence is that of Ubiquitin carboxyl-terminal hydrolase 10-A (usp10-a) from Xenopus laevis (African clawed frog).